The following is a 544-amino-acid chain: Chaperonin GroEL 1 (544 aa).

ATP contacts are provided by residues 29–32 (TLGP), 86–90 (DGTTT), Gly-413, 476–478 (NAA), and Asp-492. A disordered region spans residues 523–544 (EPVKAPAGGGDMDGMGGMGGMM). The segment covering 529–544 (AGGGDMDGMGGMGGMM) has biased composition (gly residues).

The protein belongs to the chaperonin (HSP60) family. As to quaternary structure, forms a cylinder of 14 subunits composed of two heptameric rings stacked back-to-back. Interacts with the co-chaperonin GroES.

It localises to the cytoplasm. It catalyses the reaction ATP + H2O + a folded polypeptide = ADP + phosphate + an unfolded polypeptide.. In terms of biological role, together with its co-chaperonin GroES, plays an essential role in assisting protein folding. The GroEL-GroES system forms a nano-cage that allows encapsulation of the non-native substrate proteins and provides a physical environment optimized to promote and accelerate protein folding. The protein is Chaperonin GroEL 1 of Cutibacterium acnes (strain DSM 16379 / KPA171202) (Propionibacterium acnes).